Consider the following 218-residue polypeptide: Pyridoxine/pyridoxamine 5'-phosphate oxidase (218 aa).

Substrate-binding positions include 14-17 (RREY) and K72. Residues 67–72 (RIVLLK), 82–83 (YT), R88, K89, and Q111 contribute to the FMN site. Residues Y129, R133, and S137 each coordinate substrate. Residues 146–147 (QS) and W191 contribute to the FMN site. 197-199 (RLH) serves as a coordination point for substrate. Position 201 (R201) interacts with FMN.

The protein belongs to the pyridoxamine 5'-phosphate oxidase family. As to quaternary structure, homodimer. FMN is required as a cofactor.

The enzyme catalyses pyridoxamine 5'-phosphate + O2 + H2O = pyridoxal 5'-phosphate + H2O2 + NH4(+). It catalyses the reaction pyridoxine 5'-phosphate + O2 = pyridoxal 5'-phosphate + H2O2. The protein operates within cofactor metabolism; pyridoxal 5'-phosphate salvage; pyridoxal 5'-phosphate from pyridoxamine 5'-phosphate: step 1/1. It functions in the pathway cofactor metabolism; pyridoxal 5'-phosphate salvage; pyridoxal 5'-phosphate from pyridoxine 5'-phosphate: step 1/1. Functionally, catalyzes the oxidation of either pyridoxine 5'-phosphate (PNP) or pyridoxamine 5'-phosphate (PMP) into pyridoxal 5'-phosphate (PLP). The protein is Pyridoxine/pyridoxamine 5'-phosphate oxidase of Citrobacter koseri (strain ATCC BAA-895 / CDC 4225-83 / SGSC4696).